Here is a 382-residue protein sequence, read N- to C-terminus: Protein MSN1 (382 aa).

The segment at 12 to 26 is leucine-zipper; sequence LNENEAILTNRVAEL. Composition is skewed to polar residues over residues 104–114 and 122–138; these read TLDPQGFTDGT and NYTSVPMNNDQTAHPQN. Disordered stretches follow at residues 104-138 and 155-260; these read TLDPQGFTDGTTAPGAPRNYTSVPMNNDQTAHPQN and NSQE…EEEQ. Positions 162-180 are enriched in low complexity; sequence SQQQTNSSNSISQENNSTN. Composition is skewed to polar residues over residues 181-198 and 207-221; these read PSVDTRFNKPQNYNSNLV and NPPNNDGGQSQGLYI. Positions 222–231 are enriched in low complexity; sequence SSNSSQSRQS. Over residues 232-253 the composition is skewed to polar residues; it reads PNLQKVSPNHENAVESNAQESV. A Nuclear localization signal motif is present at residues 266-271; it reads GLKRKR.

It localises to the nucleus. Its function is as follows. May function as a transcriptional activator. Increased dosage of MSN1 restores invertase expression in yeast mutants defective in the SNF1 protein kinase, and msn1 disruption reduced derepression of invertase in the wild-type. May affect SUC2 expression. Expression of MSN1 enhances growth in iron-limiting conditions. The protein is Protein MSN1 (MSN1) of Saccharomyces cerevisiae (strain ATCC 204508 / S288c) (Baker's yeast).